The following is an 898-amino-acid chain: Zinc finger protein 574 (898 aa).

3 C2H2-type zinc fingers span residues 16–38, 76–98, and 126–148; these read YVCSECNQLYGSLEEVLVHQNSH, YQCLECGQLLLSPSQLLEHQELH, and YECVDCKALFASQEMWLSHRQTH. S164 carries the phosphoserine modification. Residues 213–235 form a C2H2-type 4 zinc finger; sequence YKCSECSQLFQMPADFLEHQATH. A disordered region spans residues 243-305; that stretch reads AEEPATQQET…PRRSSSGESG (63 aa). A compositionally biased stretch (basic and acidic residues) spans 273 to 290; sequence HSYELRNELRNGEAMGRD. Phosphoserine is present on S301. C2H2-type zinc fingers lie at residues 310 to 332, 337 to 359, 365 to 387, and 393 to 414; these read LFCSACDQIFLSPHQLQQHLRSH, FKCPLCSRVFPSPSSLDQHLGDH, FLCVDCGLAFGTEALLLAHRRAH, and HSCPCGKTFVNLTKFLYHRRTH. Residues 417 to 460 form a disordered region; it reads GGVPLPTTPVPPEEPAISFPEPAPAETGELEAPELPVSEESSAE. 6 C2H2-type zinc fingers span residues 467 to 490, 496 to 518, 524 to 546, 552 to 574, 580 to 602, and 608 to 631; these read YRCLLCSREFSKALQLTRHQRFVH, HKCSICGKMFKKKSHVRNHLRTH, FPCPDCSKPFNSPANLARHRLTH, YRCGDCGKAFTQSSTLRQHRLVH, YRCQECGVRFHRPYRLLMHRYHH, and YKCRECPRSFLLRRLLEVHQLVVH. A C2H2-type 15; degenerate zinc finger spans residues 637-660; that stretch reads HRCPSCGAAFPSSLRLREHRCAAA. The C2H2-type 16 zinc-finger motif lies at 668 to 690; it reads FECGTCGKKVGSAARLQAHEAAH. Residues 691–735 form a disordered region; the sequence is AAAGPGEVLAKEPPAPRAARATRTPVAPSPTALGGTTSAAPAAPA. A compositionally biased stretch (low complexity) spans 707-734; the sequence is RAARATRTPVAPSPTALGGTTSAAPAAP. Residue S719 is modified to Phosphoserine. Position 726 is a phosphothreonine (T726). 4 C2H2-type zinc fingers span residues 740 to 762, 768 to 790, 796 to 818, and 824 to 846; these read LECSECKKLFSTETSLQVHRRIH, YPCPDCGKAFRQSTHLKDHRRLH, FACEVCGKAFAISMRLAEHRRIH, and YSCPDCGKSYRSFSNLWKHRKTH. Position 834 is an asymmetric dimethylarginine (R834).

This sequence belongs to the krueppel C2H2-type zinc-finger protein family.

The protein localises to the nucleus. Its function is as follows. May be involved in transcriptional regulation. The chain is Zinc finger protein 574 (Znf574) from Rattus norvegicus (Rat).